We begin with the raw amino-acid sequence, 194 residues long: MSNVLVLKSSISGNNSQTNQLADYVIEKLQGNNIVVRDLSQQPLPYFDTAAAIAVRGEPKTTEEKQLLALSDKLIEELKNAQTLIIGAPMYNLNVPTQLKSYFDFIARPRVTFQYTANGSEGLLKGKKAILLCAFGGLYDEENLVTQYMKSILGFIGITDVQFVYAQGIGFGPEAIEKAQASAKNKINEIVAAL.

Residues S10 and 90-93 (MYNL) contribute to the FMN site.

The protein belongs to the azoreductase type 1 family. As to quaternary structure, homodimer. The cofactor is FMN.

The enzyme catalyses 2 a quinone + NADH + H(+) = 2 a 1,4-benzosemiquinone + NAD(+). It carries out the reaction N,N-dimethyl-1,4-phenylenediamine + anthranilate + 2 NAD(+) = 2-(4-dimethylaminophenyl)diazenylbenzoate + 2 NADH + 2 H(+). Quinone reductase that provides resistance to thiol-specific stress caused by electrophilic quinones. In terms of biological role, also exhibits azoreductase activity. Catalyzes the reductive cleavage of the azo bond in aromatic azo compounds to the corresponding amines. The protein is FMN-dependent NADH:quinone oxidoreductase of Haemophilus influenzae (strain ATCC 51907 / DSM 11121 / KW20 / Rd).